The primary structure comprises 421 residues: Phosphatidylinositol 5-phosphate 4-kinase type-2 gamma (421 aa).

Ala-2 carries the post-translational modification N-acetylalanine. Ser-26 carries the post-translational modification Phosphoserine. The region spanning 43–420 (AADPLVGVFL…RFLDFIANIF (378 aa)) is the PIPK domain. The required for interaction with PIP5K1A stretch occupies residues 69–75 (VMLLPDD). Ser-349 carries the post-translational modification Phosphoserine.

As to quaternary structure, interacts with PIP5K1A; the interaction inhibits PIP5K1A kinase activity. Phosphorylated, phosphorylation is induced by EGF.

Its subcellular location is the endoplasmic reticulum. It is found in the cytoplasm. It carries out the reaction a 1,2-diacyl-sn-glycero-3-phospho-(1D-myo-inositol-5-phosphate) + ATP = a 1,2-diacyl-sn-glycero-3-phospho-(1D-myo-inositol-4,5-bisphosphate) + ADP + H(+). It catalyses the reaction 1,2-dihexadecanoyl-sn-glycero-3-phospho-(1D-myo-inositol-5-phosphate) + ATP = 1,2-dihexadecanoyl-sn-glycero-3-phospho-(1D-myo-inositol-4,5-bisphosphate) + ADP + H(+). The catalysed reaction is 1,2-dihexadecanoyl-sn-glycero-3-phospho-(1D-myo-inositol-5-phosphate) + GTP = 1,2-dihexadecanoyl-sn-glycero-3-phospho-(1D-myo-inositol-4,5-bisphosphate) + GDP + H(+). Its function is as follows. Phosphatidylinositol 5-phosphate 4-kinase with low enzymatic activity. May be a GTP sensor, has higher GTP-dependent kinase activity than ATP-dependent kinase activity. PIP4Ks negatively regulate insulin signaling through a catalytic-independent mechanism. They interact with PIP5Ks and suppress PIP5K-mediated PtdIns(4,5)P2 synthesis and insulin-dependent conversion to PtdIns(3,4,5)P3. The protein is Phosphatidylinositol 5-phosphate 4-kinase type-2 gamma of Mus musculus (Mouse).